Consider the following 507-residue polypeptide: Blue light receptor lreB (507 aa).

A PAS domain is found at 170 to 234; sequence RVLNEMKDML…EEMNECITTT (65 aa). The GATA-type zinc finger occupies 463 to 488; that stretch reads CTDCGTSDSPEWRKGPEGPKTLCNAC.

In terms of biological role, probable transcription factor involved in light regulation. Plays crucial roles in fungal growth and asexual development. Involved in conidiophore formation, sclerotium production, and conidial stress tolerance. Positively regulates the fungal pathogenicity towards maize and aflatoxin B1 production. The protein is Blue light receptor lreB of Aspergillus flavus.